Reading from the N-terminus, the 198-residue chain is Heat shock 70 kDa protein (198 aa).

Positions 170–191 are enriched in gly residues; it reads GGGVPSGMPGGMPGAGGGGGKG. The tract at residues 170 to 198 is disordered; the sequence is GGGVPSGMPGGMPGAGGGGGKGPTIEEVD.

This sequence belongs to the heat shock protein 70 family.

The sequence is that of Heat shock 70 kDa protein from Schistosoma japonicum (Blood fluke).